Here is a 234-residue protein sequence, read N- to C-terminus: Peptidyl-tRNA hydrolase (234 aa).

A tRNA-binding site is contributed by tyrosine 14. Catalysis depends on histidine 19, which acts as the Proton acceptor. Residues phenylalanine 64, asparagine 66, and asparagine 112 each coordinate tRNA. Positions 187 to 234 are disordered; sequence TGTKADEEKPKPAKSHIHQARNGVQPKKLPETGPMAEMLKKMFGPKKD.

The protein belongs to the PTH family. As to quaternary structure, monomer.

Its subcellular location is the cytoplasm. It catalyses the reaction an N-acyl-L-alpha-aminoacyl-tRNA + H2O = an N-acyl-L-amino acid + a tRNA + H(+). Functionally, hydrolyzes ribosome-free peptidyl-tRNAs (with 1 or more amino acids incorporated), which drop off the ribosome during protein synthesis, or as a result of ribosome stalling. Catalyzes the release of premature peptidyl moieties from peptidyl-tRNA molecules trapped in stalled 50S ribosomal subunits, and thus maintains levels of free tRNAs and 50S ribosomes. This Allorhizobium ampelinum (strain ATCC BAA-846 / DSM 112012 / S4) (Agrobacterium vitis (strain S4)) protein is Peptidyl-tRNA hydrolase.